We begin with the raw amino-acid sequence, 408 residues long: Exo-alpha-sialidase ARB_03431 (408 aa).

Residues 1-22 (MGIKQWLLSLVVVAISATATQA) form the signal peptide. Positions 62, 81, 87, and 150 each coordinate substrate. A glycan (N-linked (GlcNAc...) asparagine) is linked at N237. Residues R267, R324, 324–325 (RT), 333–334 (YD), K339, Y360, D378, and 378–380 (DWY) contribute to the substrate site. N398 is a glycosylation site (N-linked (GlcNAc...) asparagine).

This sequence belongs to the glycosyl hydrolase 33 family.

It is found in the secreted. It carries out the reaction Hydrolysis of alpha-(2-&gt;3)-, alpha-(2-&gt;6)-, alpha-(2-&gt;8)- glycosidic linkages of terminal sialic acid residues in oligosaccharides, glycoproteins, glycolipids, colominic acid and synthetic substrates.. Its function is as follows. Sialidase is able to release sialic acid from a wide variety of natural substrates. The polypeptide is Exo-alpha-sialidase ARB_03431 (Arthroderma benhamiae (strain ATCC MYA-4681 / CBS 112371) (Trichophyton mentagrophytes)).